We begin with the raw amino-acid sequence, 544 residues long: Esterase-6 (544 aa).

The signal sequence occupies residues 1–21; it reads MNYVGLGLIIVLSCLWLGSNA. Asn42 carries N-linked (GlcNAc...) asparagine glycosylation. A disulfide bridge connects residues Cys86 and Cys105. The Acyl-ester intermediate role is filled by Ser209. Cysteines 261 and 273 form a disulfide. Residues Asn420 and Asn456 are each glycosylated (N-linked (GlcNAc...) asparagine). His466 serves as the catalytic Charge relay system. Asn506 carries an N-linked (GlcNAc...) asparagine glycan. A disulfide bridge connects residues Cys514 and Cys535.

The protein belongs to the type-B carboxylesterase/lipase family. As to quaternary structure, monomer. Specifically expressed in the ejaculatory bulbs of male.

The protein resides in the secreted. The catalysed reaction is a carboxylic ester + H2O = an alcohol + a carboxylate + H(+). Its function is as follows. Transferred from the ejaculatory bulbs of males to the female genitals upon copulation, plays an important role in the reproductive biology. This is Esterase-6 (Est-6) from Drosophila melanogaster (Fruit fly).